We begin with the raw amino-acid sequence, 268 residues long: MKRVALLVQYDGSHYSGWQKQKNATTVQEILDRALLKITNHTVQTFAAGRTDAGVHASGQVVHCDVDCVVPGNSYSDVLNSLLPSSIRILESIEVKDSWHACYSALYRHYRYVINNSKFPNLFIDNWSWHRYQKVLDEVLMLNASRQMIGEHDFFAFQKTGSNRTNSITKIKNIDIKRVEDLIFVDIKATGFLYGMVRLIIGQLVLVGENKISPEIFTDRWVNKKKNDVKESAPAKGLCFVNAVYEENVFKKINNNDFFPVFIIKGFS.

Aspartate 52 functions as the Nucleophile in the catalytic mechanism. Tyrosine 110 is a binding site for substrate.

It belongs to the tRNA pseudouridine synthase TruA family. Homodimer.

It carries out the reaction uridine(38/39/40) in tRNA = pseudouridine(38/39/40) in tRNA. Formation of pseudouridine at positions 38, 39 and 40 in the anticodon stem and loop of transfer RNAs. The polypeptide is tRNA pseudouridine synthase A (Prochlorococcus marinus (strain MIT 9301)).